Consider the following 263-residue polypeptide: TLC domain-containing protein 4 (263 aa).

4 consecutive transmembrane segments (helical) span residues 7–27, 53–73, 90–110, and 124–144; these read LLISVTCISFFTFQLLFYFVS, VVSTCHSLVVGIFGLYIFLFD, VNIAIASGYLISDLSIIILYW, and ASLYAYYLVLKNGVLAYIGNF. Residues 44–246 form the TLC domain; it reads KKKIEWNSRV…ISKGCIKVIS (203 aa). Lys165 bears the N6-acetyllysine mark. 2 helical membrane-spanning segments follow: residues 173-193 and 211-231; these read IVINGILMTVVFFIVRIASML and LGVLIQLSWVISCVVLDVMNV.

Belongs to the TLCD4 family.

Its subcellular location is the membrane. This is TLC domain-containing protein 4 from Homo sapiens (Human).